Reading from the N-terminus, the 317-residue chain is Adenine deaminase (317 aa).

3 residues coordinate Zn(2+): His14, His16, and His194. The active-site Proton donor is the Glu197. Zn(2+) is bound at residue Asp275. Asp276 is a binding site for substrate.

Belongs to the metallo-dependent hydrolases superfamily. Adenosine and AMP deaminases family. Adenine deaminase type 2 subfamily. The cofactor is Zn(2+).

The catalysed reaction is adenine + H2O + H(+) = hypoxanthine + NH4(+). Its function is as follows. Catalyzes the hydrolytic deamination of adenine to hypoxanthine. Plays an important role in the purine salvage pathway and in nitrogen catabolism. The sequence is that of Adenine deaminase from Pseudomonas syringae pv. tomato (strain ATCC BAA-871 / DC3000).